The chain runs to 193 residues: Putative manganese efflux pump MntP (193 aa).

A run of 6 helical transmembrane segments spans residues 6–26 (VVFVALALSADCFAVSIGIAC), 39–59 (VAGTFGLFQAGMAVIGYYAGL), 61–81 (IADVISSFDHWVAFGLLTVIG), 106–126 (LGLLGVAIATSIDALAVGLTF), 132–152 (NIGLAALLVGAVSLAVSYLGF), and 165–185 (WVGIAGGLILCLIGLKILAEH).

This sequence belongs to the MntP (TC 9.B.29) family.

The protein resides in the cell membrane. Functionally, probably functions as a manganese efflux pump. The protein is Putative manganese efflux pump MntP of Dehalococcoides mccartyi (strain ATCC BAA-2266 / KCTC 15142 / 195) (Dehalococcoides ethenogenes (strain 195)).